We begin with the raw amino-acid sequence, 131 residues long: Profilin-1 (131 aa).

This sequence belongs to the profilin family. Occurs in many kinds of cells as a complex with monomeric actin in a 1:1 ratio.

The protein localises to the cytoplasm. The protein resides in the cytoskeleton. Binds to actin and affects the structure of the cytoskeleton. At high concentrations, profilin prevents the polymerization of actin, whereas it enhances it at low concentrations. By binding to PIP2, it inhibits the formation of IP3 and DG. The sequence is that of Profilin-1 from Lilium longiflorum (Trumpet lily).